A 510-amino-acid polypeptide reads, in one-letter code: NAD(P)H-quinone oxidoreductase subunit 2 B, chloroplastic (510 aa).

12 helical membrane passes run 24 to 44, 59 to 79, 99 to 119, 124 to 144, 149 to 169, 183 to 203, 229 to 249, 295 to 315, 323 to 343, 354 to 374, 395 to 415, and 418 to 438; these read LLLF…GLIL, WFYF…LFRW, IFQF…VEYI, MAIT…MFLC, LITI…LSGY, YLLM…WLYG, ISIA…PAPF, WHLL…LLAI, MLAY…IVGD, YMLF…LFGL, ALSL…AGFF, and LYLF…IGLL.

This sequence belongs to the complex I subunit 2 family. In terms of assembly, NDH is composed of at least 16 different subunits, 5 of which are encoded in the nucleus.

Its subcellular location is the plastid. It localises to the chloroplast thylakoid membrane. It carries out the reaction a plastoquinone + NADH + (n+1) H(+)(in) = a plastoquinol + NAD(+) + n H(+)(out). It catalyses the reaction a plastoquinone + NADPH + (n+1) H(+)(in) = a plastoquinol + NADP(+) + n H(+)(out). In terms of biological role, NDH shuttles electrons from NAD(P)H:plastoquinone, via FMN and iron-sulfur (Fe-S) centers, to quinones in the photosynthetic chain and possibly in a chloroplast respiratory chain. The immediate electron acceptor for the enzyme in this species is believed to be plastoquinone. Couples the redox reaction to proton translocation, and thus conserves the redox energy in a proton gradient. The polypeptide is NAD(P)H-quinone oxidoreductase subunit 2 B, chloroplastic (Agrostis stolonifera (Creeping bentgrass)).